Consider the following 55-residue polypeptide: Conotoxin Cal22d (55 aa).

Positions 1–5 (GRPSA) are excised as a propeptide.

Contains 4 disulfide bonds. Expressed by the venom duct.

It is found in the secreted. Probable neurotoxin with unknown target. Possibly targets ion channels. This chain is Conotoxin Cal22d, found in Californiconus californicus (California cone).